We begin with the raw amino-acid sequence, 458 residues long: Bifunctional protein GlmU (458 aa).

Positions 1 to 230 are pyrophosphorylase; it reads MLQVDVVILA…DWEVSGVNDK (230 aa). UDP-N-acetyl-alpha-D-glucosamine contacts are provided by residues 9–12, Lys-23, Gln-75, and 80–81; these read LAAG and GT. Residue Asp-104 coordinates Mg(2+). The UDP-N-acetyl-alpha-D-glucosamine site is built by Gly-139, Glu-155, Asn-170, and Asn-228. Asn-228 is a binding site for Mg(2+). The segment at 231–251 is linker; it reads IQLSILERAHQQDTANRLMEQ. Residues 252–458 form an N-acetyltransferase region; that stretch reads GVMFADPARF…NWKRPRKDRN (207 aa). 2 residues coordinate UDP-N-acetyl-alpha-D-glucosamine: Arg-334 and Lys-352. His-364 functions as the Proton acceptor in the catalytic mechanism. 2 residues coordinate UDP-N-acetyl-alpha-D-glucosamine: Tyr-367 and Asn-378. Acetyl-CoA is bound by residues Ala-381, 387-388, Ser-406, Ala-424, and Arg-441; that span reads NY.

The protein in the N-terminal section; belongs to the N-acetylglucosamine-1-phosphate uridyltransferase family. This sequence in the C-terminal section; belongs to the transferase hexapeptide repeat family. In terms of assembly, homotrimer. Mg(2+) serves as cofactor.

Its subcellular location is the cytoplasm. The enzyme catalyses alpha-D-glucosamine 1-phosphate + acetyl-CoA = N-acetyl-alpha-D-glucosamine 1-phosphate + CoA + H(+). It carries out the reaction N-acetyl-alpha-D-glucosamine 1-phosphate + UTP + H(+) = UDP-N-acetyl-alpha-D-glucosamine + diphosphate. The protein operates within nucleotide-sugar biosynthesis; UDP-N-acetyl-alpha-D-glucosamine biosynthesis; N-acetyl-alpha-D-glucosamine 1-phosphate from alpha-D-glucosamine 6-phosphate (route II): step 2/2. It functions in the pathway nucleotide-sugar biosynthesis; UDP-N-acetyl-alpha-D-glucosamine biosynthesis; UDP-N-acetyl-alpha-D-glucosamine from N-acetyl-alpha-D-glucosamine 1-phosphate: step 1/1. Its pathway is bacterial outer membrane biogenesis; LPS lipid A biosynthesis. Functionally, catalyzes the last two sequential reactions in the de novo biosynthetic pathway for UDP-N-acetylglucosamine (UDP-GlcNAc). The C-terminal domain catalyzes the transfer of acetyl group from acetyl coenzyme A to glucosamine-1-phosphate (GlcN-1-P) to produce N-acetylglucosamine-1-phosphate (GlcNAc-1-P), which is converted into UDP-GlcNAc by the transfer of uridine 5-monophosphate (from uridine 5-triphosphate), a reaction catalyzed by the N-terminal domain. The chain is Bifunctional protein GlmU from Nitrosomonas europaea (strain ATCC 19718 / CIP 103999 / KCTC 2705 / NBRC 14298).